An 82-amino-acid polypeptide reads, in one-letter code: MVDVFFTDTAWYVGQIFFLVLSCVIFLIFVVALLATIKLCIQICGFCNIFIISPSAYVYNRGRQLYKSYSEHVIPSTLDDLI.

Residues 1–16 (MVDVFFTDTAWYVGQI) lie on the Virion surface side of the membrane. Residues 17 to 37 (FFLVLSCVIFLIFVVALLATI) traverse the membrane as a helical segment. Residues 38-78 (KLCIQICGFCNIFIISPSAYVYNRGRQLYKSYSEHVIPSTL) lie on the Intravirion side of the membrane.

The protein belongs to the betacoronaviruses E protein family. As to quaternary structure, homopentamer. Interacts with membrane protein M in the budding compartment of the host cell, which is located between endoplasmic reticulum and the Golgi complex. Interacts with Nucleoprotein.

It is found in the host Golgi apparatus membrane. Its function is as follows. Plays a central role in virus morphogenesis and assembly. Acts as a viroporin and self-assembles in host membranes forming pentameric protein-lipid pores that allow ion transport. Also plays a role in the induction of apoptosis. The polypeptide is Envelope small membrane protein (Homo sapiens (Human)).